The chain runs to 585 residues: Arginine--tRNA ligase (585 aa).

Residues 131–141 (ANPTGPMHVGH) carry the 'HIGH' region motif.

This sequence belongs to the class-I aminoacyl-tRNA synthetase family. As to quaternary structure, monomer.

It localises to the cytoplasm. The catalysed reaction is tRNA(Arg) + L-arginine + ATP = L-arginyl-tRNA(Arg) + AMP + diphosphate. This is Arginine--tRNA ligase from Brucella melitensis biotype 1 (strain ATCC 23456 / CCUG 17765 / NCTC 10094 / 16M).